Here is a 392-residue protein sequence, read N- to C-terminus: UPF0229 protein CPE1333 (392 aa).

The disordered stretch occupies residues 75-100; that stretch reads VTTGTGEERRGDRISSDKRKAISNNK. Residues 80–94 are compositionally biased toward basic and acidic residues; sequence GEERRGDRISSDKRK.

The protein belongs to the UPF0229 family.

The chain is UPF0229 protein CPE1333 from Clostridium perfringens (strain 13 / Type A).